The following is a 422-amino-acid chain: Probable alpha-1,6-mannosyltransferase MNN11 (422 aa).

Residues 1–31 (MAIKPRTKGKTYSSRSVGSQWFNRLGFKQNK) are Cytoplasmic-facing. The helical; Signal-anchor for type II membrane protein transmembrane segment at 32–52 (YGTCKFLSIITAFVFILYFFS) threads the bilayer. The Lumenal portion of the chain corresponds to 53–422 (NRFYPISRSA…GHMYQKIKKS (370 aa)).

The protein belongs to the glycosyltransferase 34 family. In terms of assembly, component of the M-Pol II complex composed of ANP1, MNN9, MNN10, MNN11 and HOC1.

Its subcellular location is the golgi apparatus. The protein localises to the cis-Golgi network membrane. In terms of biological role, required for synthesis of full-length mannan chains. Its function is as follows. The M-Pol II complex possesses alpha-1,6-mannosyltransferase activity and is probably involved in the elongation of the mannan backbone of N-linked glycans on cell wall and periplasmic proteins. The sequence is that of Probable alpha-1,6-mannosyltransferase MNN11 (MNN11) from Saccharomyces cerevisiae (strain ATCC 204508 / S288c) (Baker's yeast).